A 257-amino-acid polypeptide reads, in one-letter code: Nickel import system ATP-binding protein NikD (257 aa).

Positions 4-245 (IDIQNLTIKN…HLHPYTERLI (242 aa)) constitute an ABC transporter domain. Residue 37 to 44 (GESGAGKS) coordinates ATP.

This sequence belongs to the ABC transporter superfamily. As to quaternary structure, the complex is composed of two ATP-binding proteins (NikD and NikE), two transmembrane proteins (NikB and NikC) and a solute-binding protein (NikA).

The protein localises to the cell membrane. It carries out the reaction Ni(2+)(out) + ATP + H2O = Ni(2+)(in) + ADP + phosphate + H(+). Part of the ABC transporter complex NikABCDE (Opp2) involved in nickel import. Probably responsible for energy coupling to the transport system. The sequence is that of Nickel import system ATP-binding protein NikD from Staphylococcus aureus (strain MRSA252).